The primary structure comprises 632 residues: tRNA uridine 5-carboxymethylaminomethyl modification enzyme MnmG (632 aa).

Gly-13–Gly-18 serves as a coordination point for FAD. Gly-274–Phe-288 lines the NAD(+) pocket.

The protein belongs to the MnmG family. Homodimer. Heterotetramer of two MnmE and two MnmG subunits. It depends on FAD as a cofactor.

Its subcellular location is the cytoplasm. Functionally, NAD-binding protein involved in the addition of a carboxymethylaminomethyl (cmnm) group at the wobble position (U34) of certain tRNAs, forming tRNA-cmnm(5)s(2)U34. This chain is tRNA uridine 5-carboxymethylaminomethyl modification enzyme MnmG, found in Dichelobacter nodosus (strain VCS1703A).